Here is a 605-residue protein sequence, read N- to C-terminus: Pescadillo homolog (605 aa).

The sufficient for interaction with ERB1 stretch occupies residues 51–484 (KANKGSTAPT…GEEEESESES (434 aa)). Position 288 is a phosphoserine (S288). Positions 294–342 (LKSALNADEANTDETEKEEEQEKKQEKEQEKEQNEETELDTFEDNNKNK) form a coiled coil. The interval 297-342 (ALNADEANTDETEKEEEQEKKQEKEQEKEQNEETELDTFEDNNKNK) is disordered. Positions 303-312 (ANTDETEKEE) are enriched in acidic residues. The residue at position 308 (T308) is a Phosphothreonine. Basic and acidic residues predominate over residues 313 to 327 (EQEKKQEKEQEKEQN). Positions 355–449 (PVASLFSAFV…ELVPANKYLP (95 aa)) constitute a BRCT domain. The interval 459 to 605 (PWGDAIGYDP…AKLNKLDSKK (147 aa)) is disordered. A compositionally biased stretch (acidic residues) spans 473–510 (EEGEEEESESESESEDQVEEEDQEVVAGEEDDDDDEEL). Residues 530-605 (EADKDVNKSK…AKLNKLDSKK (76 aa)) are a coiled coil. Over residues 562–571 (KQKKLYKKMK) the composition is skewed to basic residues. Over residues 575-584 (AKKEEQAENL) the composition is skewed to basic and acidic residues. The span at 585–598 (KKKKKQIAKQKAKL) shows a compositional bias: basic residues.

This sequence belongs to the pescadillo family. In terms of assembly, component of the NOP7 complex, composed of ERB1, NOP7 and YTM1. The complex is held together by ERB1, which interacts with NOP7 via its N-terminal domain and with YTM1 via a high-affinity interaction between the seven-bladed beta-propeller domains of the 2 proteins. The NOP7 complex associates with the 66S pre-ribosome.

It is found in the nucleus. The protein resides in the nucleolus. Its subcellular location is the nucleoplasm. In terms of biological role, component of the NOP7 complex, which is required for maturation of the 25S and 5.8S ribosomal RNAs and formation of the 60S ribosome. This Saccharomyces cerevisiae (strain YJM789) (Baker's yeast) protein is Pescadillo homolog.